The chain runs to 128 residues: Probable 4-amino-4-deoxy-L-arabinose-phosphoundecaprenol flippase subunit ArnF (128 aa).

Residues 1–2 (MG) are Cytoplasmic-facing. A helical membrane pass occupies residues 3-23 (LIWGLFSVIIASVAQLSLGFA). Topologically, residues 24–35 (ASHLPPMTHLWD) are periplasmic. A helical transmembrane segment spans residues 36–56 (FIAALLAFGLDARILLLGLLG). Topologically, residues 57–75 (YLLSVFCWYKTLHKLALSK) are cytoplasmic. Residues 76–96 (AYALLSMSYVLVWIASMVLPG) form a helical membrane-spanning segment. Residues 97–100 (REGT) lie on the Periplasmic side of the membrane. A helical membrane pass occupies residues 101–121 (FSLKALLGVACIMSGLMLIFL). At 122–128 (PTTKQRY) the chain is on the cytoplasmic side.

The protein belongs to the ArnF family. As to quaternary structure, heterodimer of ArnE and ArnF.

Its subcellular location is the cell inner membrane. Its pathway is bacterial outer membrane biogenesis; lipopolysaccharide biosynthesis. Functionally, translocates 4-amino-4-deoxy-L-arabinose-phosphoundecaprenol (alpha-L-Ara4N-phosphoundecaprenol) from the cytoplasmic to the periplasmic side of the inner membrane. The sequence is that of Probable 4-amino-4-deoxy-L-arabinose-phosphoundecaprenol flippase subunit ArnF from Shigella flexneri serotype 5b (strain 8401).